Here is a 119-residue protein sequence, read N- to C-terminus: Chorion class CA protein ERA.2 (119 aa).

A signal peptide spans Met-1 to Ser-21. A left arm region spans residues Gln-22–Gly-55. A central domain region spans residues Gly-56 to Ile-103. The right arm stretch occupies residues Ser-104–Tyr-119.

Belongs to the chorion protein family.

In terms of biological role, this protein is one of many from the eggshell of the silk moth. The sequence is that of Chorion class CA protein ERA.2 (ERA.2) from Bombyx mori (Silk moth).